The following is a 382-amino-acid chain: Dual-specificity RNA methyltransferase RlmN (382 aa).

Catalysis depends on Glu96, which acts as the Proton acceptor. The Radical SAM core domain occupies 102 to 342 (QGKRGTLCVS…VRTTRGEDID (241 aa)). Cys109 and Cys345 are disulfide-bonded. Residues Cys116, Cys120, and Cys123 each coordinate [4Fe-4S] cluster. S-adenosyl-L-methionine is bound by residues 170–171 (GE), Ser202, 224–226 (SLH), and Asn302. Cys345 functions as the S-methylcysteine intermediate in the catalytic mechanism.

This sequence belongs to the radical SAM superfamily. RlmN family. Requires [4Fe-4S] cluster as cofactor.

Its subcellular location is the cytoplasm. The enzyme catalyses adenosine(2503) in 23S rRNA + 2 reduced [2Fe-2S]-[ferredoxin] + 2 S-adenosyl-L-methionine = 2-methyladenosine(2503) in 23S rRNA + 5'-deoxyadenosine + L-methionine + 2 oxidized [2Fe-2S]-[ferredoxin] + S-adenosyl-L-homocysteine. It carries out the reaction adenosine(37) in tRNA + 2 reduced [2Fe-2S]-[ferredoxin] + 2 S-adenosyl-L-methionine = 2-methyladenosine(37) in tRNA + 5'-deoxyadenosine + L-methionine + 2 oxidized [2Fe-2S]-[ferredoxin] + S-adenosyl-L-homocysteine. In terms of biological role, specifically methylates position 2 of adenine 2503 in 23S rRNA and position 2 of adenine 37 in tRNAs. m2A2503 modification seems to play a crucial role in the proofreading step occurring at the peptidyl transferase center and thus would serve to optimize ribosomal fidelity. This chain is Dual-specificity RNA methyltransferase RlmN, found in Pseudomonas fluorescens (strain Pf0-1).